A 118-amino-acid polypeptide reads, in one-letter code: Large ribosomal subunit protein bL19 (118 aa).

This sequence belongs to the bacterial ribosomal protein bL19 family.

Its function is as follows. This protein is located at the 30S-50S ribosomal subunit interface and may play a role in the structure and function of the aminoacyl-tRNA binding site. The polypeptide is Large ribosomal subunit protein bL19 (Campylobacter hominis (strain ATCC BAA-381 / DSM 21671 / CCUG 45161 / LMG 19568 / NCTC 13146 / CH001A)).